Here is a 332-residue protein sequence, read N- to C-terminus: Holliday junction branch migration complex subunit RuvB (332 aa).

The large ATPase domain (RuvB-L) stretch occupies residues 1–182; it reads MKLNKNSELK…FGLILKLNYY (182 aa). ATP is bound by residues Leu21, Arg22, Gly63, Lys66, Thr67, Thr68, 129 to 131, Arg172, Tyr182, and Arg219; that span reads EDY. Thr67 is a binding site for Mg(2+). A small ATPAse domain (RuvB-S) region spans residues 183–253; the sequence is SEDELELIIK…ISEIALEKLT (71 aa). Residues 256–332 are head domain (RuvB-H); sequence KNGLDDADYT…FKLFKNDKIK (77 aa). 2 residues coordinate DNA: Arg311 and Arg316.

Belongs to the RuvB family. As to quaternary structure, homohexamer. Forms an RuvA(8)-RuvB(12)-Holliday junction (HJ) complex. HJ DNA is sandwiched between 2 RuvA tetramers; dsDNA enters through RuvA and exits via RuvB. An RuvB hexamer assembles on each DNA strand where it exits the tetramer. Each RuvB hexamer is contacted by two RuvA subunits (via domain III) on 2 adjacent RuvB subunits; this complex drives branch migration. In the full resolvosome a probable DNA-RuvA(4)-RuvB(12)-RuvC(2) complex forms which resolves the HJ.

The protein localises to the cytoplasm. It catalyses the reaction ATP + H2O = ADP + phosphate + H(+). Functionally, the RuvA-RuvB-RuvC complex processes Holliday junction (HJ) DNA during genetic recombination and DNA repair, while the RuvA-RuvB complex plays an important role in the rescue of blocked DNA replication forks via replication fork reversal (RFR). RuvA specifically binds to HJ cruciform DNA, conferring on it an open structure. The RuvB hexamer acts as an ATP-dependent pump, pulling dsDNA into and through the RuvAB complex. RuvB forms 2 homohexamers on either side of HJ DNA bound by 1 or 2 RuvA tetramers; 4 subunits per hexamer contact DNA at a time. Coordinated motions by a converter formed by DNA-disengaged RuvB subunits stimulates ATP hydrolysis and nucleotide exchange. Immobilization of the converter enables RuvB to convert the ATP-contained energy into a lever motion, pulling 2 nucleotides of DNA out of the RuvA tetramer per ATP hydrolyzed, thus driving DNA branch migration. The RuvB motors rotate together with the DNA substrate, which together with the progressing nucleotide cycle form the mechanistic basis for DNA recombination by continuous HJ branch migration. Branch migration allows RuvC to scan DNA until it finds its consensus sequence, where it cleaves and resolves cruciform DNA. This chain is Holliday junction branch migration complex subunit RuvB, found in Phytoplasma mali (strain AT).